We begin with the raw amino-acid sequence, 647 residues long: DNA ligase (647 aa).

NAD(+) contacts are provided by residues 30–34, 79–80, and glutamate 105; these read DEEYD and SM. The active-site N6-AMP-lysine intermediate is the lysine 107. Positions 128, 162, and 301 each coordinate NAD(+). Residues cysteine 395, cysteine 398, cysteine 411, and cysteine 416 each contribute to the Zn(2+) site. One can recognise a BRCT domain in the interval 570-647; sequence KSDGVIFGKT…ESAFNELVKE (78 aa).

It belongs to the NAD-dependent DNA ligase family. LigA subfamily. The cofactor is Mg(2+). Mn(2+) serves as cofactor.

It catalyses the reaction NAD(+) + (deoxyribonucleotide)n-3'-hydroxyl + 5'-phospho-(deoxyribonucleotide)m = (deoxyribonucleotide)n+m + AMP + beta-nicotinamide D-nucleotide.. Functionally, DNA ligase that catalyzes the formation of phosphodiester linkages between 5'-phosphoryl and 3'-hydroxyl groups in double-stranded DNA using NAD as a coenzyme and as the energy source for the reaction. It is essential for DNA replication and repair of damaged DNA. The polypeptide is DNA ligase (Campylobacter jejuni subsp. jejuni serotype O:23/36 (strain 81-176)).